Reading from the N-terminus, the 55-residue chain is Ferredoxin-1 (55 aa).

4Fe-4S ferredoxin-type domains are found at residues 2-27 (YKIEETCISCGACAAECPVNAIEQGD) and 28-55 (TIFVVNADTCIDCGNCANVCPVGAPVAE). [4Fe-4S] cluster is bound by residues C8, C11, C14, C18, C37, C40, C43, and C47.

The cofactor is [4Fe-4S] cluster.

Its function is as follows. Ferredoxins are iron-sulfur proteins that transfer electrons in a wide variety of metabolic reactions. The chain is Ferredoxin-1 from Rhodospirillum rubrum.